The following is a 56-amino-acid chain: Small ribosomal subunit protein uS14 (56 aa).

S9 bears the Phosphoserine mark. R12 carries the omega-N-methylarginine modification. Zn(2+) is bound by residues C21, C24, C39, and C42. N6-acetyllysine is present on K48.

The protein belongs to the universal ribosomal protein uS14 family. Component of the 40S small ribosomal subunit. Requires Zn(2+) as cofactor.

The protein resides in the cytoplasm. The protein localises to the cytosol. It is found in the rough endoplasmic reticulum. Its function is as follows. Component of the small ribosomal subunit. The ribosome is a large ribonucleoprotein complex responsible for the synthesis of proteins in the cell. This is Small ribosomal subunit protein uS14 (Rps29) from Mus musculus (Mouse).